A 224-amino-acid polypeptide reads, in one-letter code: Jacalin-related lectin 24 (224 aa).

In terms of domain architecture, Jacalin-type lectin spans 8 to 160 (MFKVGPIGSK…LTSIGIYVYP (153 aa)).

It belongs to the jacalin lectin family.

The protein is Jacalin-related lectin 24 (JAL24) of Arabidopsis thaliana (Mouse-ear cress).